The primary structure comprises 95 residues: Pyrimidine/purine nucleoside phosphorylase (95 aa).

The protein belongs to the nucleoside phosphorylase PpnP family.

The enzyme catalyses a purine D-ribonucleoside + phosphate = a purine nucleobase + alpha-D-ribose 1-phosphate. It catalyses the reaction adenosine + phosphate = alpha-D-ribose 1-phosphate + adenine. It carries out the reaction cytidine + phosphate = cytosine + alpha-D-ribose 1-phosphate. The catalysed reaction is guanosine + phosphate = alpha-D-ribose 1-phosphate + guanine. The enzyme catalyses inosine + phosphate = alpha-D-ribose 1-phosphate + hypoxanthine. It catalyses the reaction thymidine + phosphate = 2-deoxy-alpha-D-ribose 1-phosphate + thymine. It carries out the reaction uridine + phosphate = alpha-D-ribose 1-phosphate + uracil. The catalysed reaction is xanthosine + phosphate = alpha-D-ribose 1-phosphate + xanthine. Catalyzes the phosphorolysis of diverse nucleosides, yielding D-ribose 1-phosphate and the respective free bases. Can use uridine, adenosine, guanosine, cytidine, thymidine, inosine and xanthosine as substrates. Also catalyzes the reverse reactions. This Vibrio cholerae serotype O1 (strain ATCC 39315 / El Tor Inaba N16961) protein is Pyrimidine/purine nucleoside phosphorylase.